The chain runs to 268 residues: MAEVPELASEMMAYYSGNEDDLFFDVDGPKQMKCSFQDLDLCPLDGGIQLQISHEHYNEGFRQAVSVVVAMEKLRKMLVPCPQIFQDNDLSTLIPFIFEEEPVFLDTRNNDACVHDAPVRSLHCTLRDAQLKSLVMSGPYELKALHLQGQDLEQQVVFSMSFVQGEESNDKIPVALGLKAKNLYLSCVLKDDKPTLQLESVDPKNYPKKKMEKRFVFNKIEINNKLEFESAQFPNWYISTSQAESMPVFLGGTRGGQDITDFTMQFVS.

Residues 1–116 (MAEVPELASE…TRNNDACVHD (116 aa)) constitute a propeptide that is removed on maturation.

The protein belongs to the IL-1 family. Monomer. In its precursor form, weakly interacts with full-length MEFV; the mature cytokine does not interact at all. Interacts with integrins ITGAV:ITGBV and ITGA5:ITGB1; integrin-binding is required for IL1B signaling. Interacts with cargo receptor TMED10; the interaction is direct and is required for the secretion of IL1B mature form. Interacts with HSP90AB1; the interaction facilitates cargo translocation into the ERGIC. Interacts with HSP90B1; the interaction facilitates cargo translocation into the ERGIC.

The protein resides in the cytoplasm. It localises to the cytosol. Its subcellular location is the secreted. The protein localises to the lysosome. It is found in the extracellular exosome. Its function is as follows. Potent pro-inflammatory cytokine. Initially discovered as the major endogenous pyrogen, induces prostaglandin synthesis, neutrophil influx and activation, T-cell activation and cytokine production, B-cell activation and antibody production, and fibroblast proliferation and collagen production. Promotes Th17 differentiation of T-cells. Synergizes with IL12/interleukin-12 to induce IFNG synthesis from T-helper 1 (Th1) cells. Plays a role in angiogenesis by inducing VEGF production synergistically with TNF and IL6. Involved in transduction of inflammation downstream of pyroptosis: its mature form is specifically released in the extracellular milieu by passing through the gasdermin-D (GSDMD) pore. The polypeptide is Interleukin-1 beta (IL1B) (Macaca fascicularis (Crab-eating macaque)).